Reading from the N-terminus, the 58-residue chain is Ribulose bisphosphate carboxylase large chain (58 aa).

The propeptide occupies 1–2 (MS). The residue at position 3 (P3) is an N-acetylproline. K14 is subject to N6,N6,N6-trimethyllysine.

The protein belongs to the RuBisCO large chain family. Type I subfamily. As to quaternary structure, heterohexadecamer of 8 large chains and 8 small chains.

The protein localises to the plastid. It localises to the chloroplast. The enzyme catalyses 2 (2R)-3-phosphoglycerate + 2 H(+) = D-ribulose 1,5-bisphosphate + CO2 + H2O. It carries out the reaction D-ribulose 1,5-bisphosphate + O2 = 2-phosphoglycolate + (2R)-3-phosphoglycerate + 2 H(+). Functionally, ruBisCO catalyzes two reactions: the carboxylation of D-ribulose 1,5-bisphosphate, the primary event in carbon dioxide fixation, as well as the oxidative fragmentation of the pentose substrate in the photorespiration process. Both reactions occur simultaneously and in competition at the same active site. The protein is Ribulose bisphosphate carboxylase large chain (rbcL) of Weinmannia silvicola (Towai).